The primary structure comprises 381 residues: Transaldolase 2 (381 aa).

K141 serves as the catalytic Schiff-base intermediate with substrate.

Belongs to the transaldolase family. Type 2 subfamily.

It is found in the cytoplasm. It catalyses the reaction D-sedoheptulose 7-phosphate + D-glyceraldehyde 3-phosphate = D-erythrose 4-phosphate + beta-D-fructose 6-phosphate. Its pathway is carbohydrate degradation; pentose phosphate pathway; D-glyceraldehyde 3-phosphate and beta-D-fructose 6-phosphate from D-ribose 5-phosphate and D-xylulose 5-phosphate (non-oxidative stage): step 2/3. Its function is as follows. Transaldolase is important for the balance of metabolites in the pentose-phosphate pathway. This chain is Transaldolase 2 (tal2), found in Nostoc sp. (strain PCC 7120 / SAG 25.82 / UTEX 2576).